The primary structure comprises 92 residues: UPF0223 protein SP_1404 (92 aa).

This sequence belongs to the UPF0223 family.

The sequence is that of UPF0223 protein SP_1404 from Streptococcus pneumoniae serotype 4 (strain ATCC BAA-334 / TIGR4).